The primary structure comprises 311 residues: Metal-staphylopine import system permease protein CntB (311 aa).

6 helical membrane-spanning segments follow: residues Ile-9–Ile-29, Leu-105–Ala-125, Val-139–Val-159, Gly-173–Phe-193, Ile-237–Ala-257, and Phe-274–Leu-294. The 197-residue stretch at Phe-99–Ala-295 folds into the ABC transmembrane type-1 domain.

It belongs to the binding-protein-dependent transport system permease family. As to quaternary structure, the complex is composed of two ATP-binding proteins (CntD and CntF), two transmembrane proteins (CntB and CntC) and a solute-binding protein (CntA).

The protein localises to the cell membrane. Its function is as follows. Part of the ABC transporter complex CntABCDF (Opp1) involved in the uptake of metal in complex with the metallophore staphylopine (StP). May be involved in the import of a large array of divalent metals ions such as nickel, cobalt, zinc, copper and iron. Probably responsible for the translocation of the substrate across the membrane. The chain is Metal-staphylopine import system permease protein CntB from Staphylococcus aureus (strain Mu50 / ATCC 700699).